A 178-amino-acid polypeptide reads, in one-letter code: ATP synthase subunit b (178 aa).

A helical transmembrane segment spans residues 30–50 (FFFVLAIFLIVLAVIGTFVVP).

The protein belongs to the ATPase B chain family. F-type ATPases have 2 components, F(1) - the catalytic core - and F(0) - the membrane proton channel. F(1) has five subunits: alpha(3), beta(3), gamma(1), delta(1), epsilon(1). F(0) has three main subunits: a(1), b(2) and c(10-14). The alpha and beta chains form an alternating ring which encloses part of the gamma chain. F(1) is attached to F(0) by a central stalk formed by the gamma and epsilon chains, while a peripheral stalk is formed by the delta and b chains.

It is found in the cell membrane. Functionally, f(1)F(0) ATP synthase produces ATP from ADP in the presence of a proton or sodium gradient. F-type ATPases consist of two structural domains, F(1) containing the extramembraneous catalytic core and F(0) containing the membrane proton channel, linked together by a central stalk and a peripheral stalk. During catalysis, ATP synthesis in the catalytic domain of F(1) is coupled via a rotary mechanism of the central stalk subunits to proton translocation. In terms of biological role, component of the F(0) channel, it forms part of the peripheral stalk, linking F(1) to F(0). This chain is ATP synthase subunit b, found in Mycobacterium avium (strain 104).